A 299-amino-acid chain; its full sequence is Bifunctional protein FolD 1 (299 aa).

Residues 168 to 170 (GRS), Ser193, and Ile234 contribute to the NADP(+) site.

Belongs to the tetrahydrofolate dehydrogenase/cyclohydrolase family. In terms of assembly, homodimer.

The catalysed reaction is (6R)-5,10-methylene-5,6,7,8-tetrahydrofolate + NADP(+) = (6R)-5,10-methenyltetrahydrofolate + NADPH. It carries out the reaction (6R)-5,10-methenyltetrahydrofolate + H2O = (6R)-10-formyltetrahydrofolate + H(+). It participates in one-carbon metabolism; tetrahydrofolate interconversion. Catalyzes the oxidation of 5,10-methylenetetrahydrofolate to 5,10-methenyltetrahydrofolate and then the hydrolysis of 5,10-methenyltetrahydrofolate to 10-formyltetrahydrofolate. This is Bifunctional protein FolD 1 from Mesorhizobium japonicum (strain LMG 29417 / CECT 9101 / MAFF 303099) (Mesorhizobium loti (strain MAFF 303099)).